Here is a 129-residue protein sequence, read N- to C-terminus: MRHRKSGRKFNRTSAHRKSMFRNMAASLVEHELIKTTVPKAKELRRVAEPLITLAKSDSVANRRLAFSRLRSRDAVTKLFEEIGPRYKDRPGGYLRILKCGLRPGDSAPMAFVELVDRPVVEAEGDNEE.

The protein belongs to the bacterial ribosomal protein bL17 family. In terms of assembly, part of the 50S ribosomal subunit. Contacts protein L32.

This is Large ribosomal subunit protein bL17 from Hahella chejuensis (strain KCTC 2396).